The following is a 315-amino-acid chain: Small ribosomal subunit protein mS45 (315 aa).

A mitochondrion-targeting transit peptide spans 1–66 (MRNSVEFSQL…SKYVACNSRS (66 aa)).

This sequence belongs to the mitochondrion-specific ribosomal protein mS45 family. As to quaternary structure, component of the mitochondrial small ribosomal subunit (mt-SSU). Mature yeast 74S mitochondrial ribosomes consist of a small (37S) and a large (54S) subunit. The 37S small subunit contains a 15S ribosomal RNA (15S mt-rRNA) and at least 32 different proteins. The 54S large subunit contains a 21S rRNA (21S mt-rRNA) and at least 45 different proteins.

The protein localises to the mitochondrion. Its function is as follows. Component of the mitochondrial ribosome (mitoribosome), a dedicated translation machinery responsible for the synthesis of mitochondrial genome-encoded proteins, including at least some of the essential transmembrane subunits of the mitochondrial respiratory chain. The mitoribosomes are attached to the mitochondrial inner membrane and translation products are cotranslationally integrated into the membrane. Required for mitochondrial protein synthesis. Has a role in mitochondrial integrity and cell respiration. In Schizosaccharomyces pombe (strain 972 / ATCC 24843) (Fission yeast), this protein is Small ribosomal subunit protein mS45 (bot1).